A 754-amino-acid polypeptide reads, in one-letter code: Photosystem I P700 chlorophyll a apoprotein A1 (754 aa).

8 consecutive transmembrane segments (helical) span residues 72–95, 158–181, 197–221, 293–311, 351–374, 390–416, 438–460, and 535–553; these read IFSA…FHGA, LYCT…FHYH, MNHH…HVSL, TAHH…GHMY, WHAQ…HHMY, LSLF…IFMV, AIIS…LYIH, and FMVH…LILL. Positions 577 and 586 each coordinate [4Fe-4S] cluster. 2 helical membrane passes run 593–614 and 668–690; these read HVFL…HFSW and LSAY…MFLF. Histidine 679 contributes to the chlorophyll a' binding site. Chlorophyll a contacts are provided by methionine 687 and tyrosine 695. Position 696 (tryptophan 696) interacts with phylloquinone. A helical transmembrane segment spans residues 728–748; sequence AVGVAHYLLGGIVTTWAFFLA.

It belongs to the PsaA/PsaB family. As to quaternary structure, the PsaA/B heterodimer binds the P700 chlorophyll special pair and subsequent electron acceptors. PSI consists of a core antenna complex that captures photons, and an electron transfer chain that converts photonic excitation into a charge separation. The cyanobacterial PSI reaction center is composed of one copy each of PsaA,B,C,D,E,F,I,J,K,L,M and X, and forms trimeric complexes. Requires PSI electron transfer chain: 5 chlorophyll a, 1 chlorophyll a', 2 phylloquinones and 3 4Fe-4S clusters. PSI core antenna: 90 chlorophyll a, 22 carotenoids, 3 phospholipids and 1 galactolipid. P700 is a chlorophyll a/chlorophyll a' dimer, A0 is one or more chlorophyll a, A1 is one or both phylloquinones and FX is a shared 4Fe-4S iron-sulfur center. as cofactor.

The protein resides in the cellular thylakoid membrane. The enzyme catalyses reduced [plastocyanin] + hnu + oxidized [2Fe-2S]-[ferredoxin] = oxidized [plastocyanin] + reduced [2Fe-2S]-[ferredoxin]. Functionally, psaA and PsaB bind P700, the primary electron donor of photosystem I (PSI), as well as the electron acceptors A0, A1 and FX. PSI is a plastocyanin/cytochrome c6-ferredoxin oxidoreductase, converting photonic excitation into a charge separation, which transfers an electron from the donor P700 chlorophyll pair to the spectroscopically characterized acceptors A0, A1, FX, FA and FB in turn. Oxidized P700 is reduced on the lumenal side of the thylakoid membrane by plastocyanin or cytochrome c6. The polypeptide is Photosystem I P700 chlorophyll a apoprotein A1 (Rippkaea orientalis (strain PCC 8801 / RF-1) (Cyanothece sp. (strain PCC 8801))).